A 191-amino-acid chain; its full sequence is Ribonuclease M5 1 (191 aa).

The Toprim domain occupies lysine 10 to proline 93. Mg(2+) is bound by residues glutamate 16, aspartate 62, and aspartate 64.

The protein belongs to the ribonuclease M5 family. Mg(2+) serves as cofactor.

The protein localises to the cytoplasm. The catalysed reaction is Endonucleolytic cleavage of RNA, removing 21 and 42 nucleotides, respectively, from the 5'- and 3'-termini of a 5S-rRNA precursor.. In terms of biological role, required for correct processing of both the 5' and 3' ends of 5S rRNA precursor. Cleaves both sides of a double-stranded region yielding mature 5S rRNA in one step. This is Ribonuclease M5 1 from Ligilactobacillus salivarius (strain CECT 5713) (Lactobacillus salivarius).